Here is a 330-residue protein sequence, read N- to C-terminus: Polygalacturonase inhibitor 1 (330 aa).

A signal peptide spans methionine 1–serine 21. 2 disulfides stabilise this stretch: cysteine 25/cysteine 55 and cysteine 56/cysteine 63. LRR repeat units lie at residues asparagine 69–leucine 93, proline 94–lysine 117, leucine 118–leucine 142, lysine 143–leucine 166, proline 167–serine 189, proline 191–isoleucine 215, phenylalanine 217–serine 237, asparagine 238–isoleucine 260, proline 261–alanine 285, and leucine 287–threonine 309. N-linked (GlcNAc...) asparagine glycans are attached at residues asparagine 106 and asparagine 130. N-linked (GlcNAc...) asparagine glycosylation occurs at asparagine 238. An N-linked (GlcNAc...) asparagine glycan is attached at asparagine 291. Disulfide bonds link cysteine 298/cysteine 320 and cysteine 322/cysteine 329.

The protein belongs to the polygalacturonase-inhibiting protein family.

It is found in the secreted. Its subcellular location is the cell wall. The protein localises to the membrane. Inhibitor of fungal polygalacturonase. It is an important factor for plant resistance to phytopathogenic fungi. This Arabidopsis thaliana (Mouse-ear cress) protein is Polygalacturonase inhibitor 1 (PGIP1).